The chain runs to 138 residues: Protein PsiE homolog (138 aa).

The next 4 membrane-spanning stretches (helical) occupy residues 14–34 (LQALLNVCLFFLAIALSGLLI), 56–76 (YEMLGELLIFFMYFEFIALII), 84–104 (HFPLRYFIYIGITAVIRLIII), and 109–129 (AISTFWWAMAILAMICAFFIV).

Belongs to the PsiE family.

It localises to the cell membrane. This chain is Protein PsiE homolog, found in Bacillus velezensis (strain DSM 23117 / BGSC 10A6 / LMG 26770 / FZB42) (Bacillus amyloliquefaciens subsp. plantarum).